Consider the following 431-residue polypeptide: Interleukin-11 receptor subunit alpha (431 aa).

The signal sequence occupies residues 1–23 (MSSSRSGLTRVLVAVATALVSSS). Residues 24–371 (TPCPQAWGPP…DPLEQVAVLA (348 aa)) are Extracellular-facing. In terms of domain architecture, Ig-like C2-type spans 27 to 110 (PQAWGPPGVQ…FGGMVTLKLG (84 aa)). Intrachain disulfides connect C48/C94, C120/C130, and C170/C180. 2 consecutive Fibronectin type-III domains span residues 112–219 (PPAR…LRPD) and 220–317 (PPQG…TPST). The N-linked (GlcNAc...) asparagine glycan is linked to N127. The tract at residues 151 to 170 (KTLPGAESQRESPSTGPWPC) is disordered. N194 carries N-linked (GlcNAc...) asparagine glycosylation. The WSXWS motif motif lies at 304 to 308 (WSAWS). The disordered stretch occupies residues 310–360 (EAWGTPSTGPLRDEVPDGSRGHEQKLEAAAQEDSPAPPSPSLQPDPRPLDH). Positions 320–335 (LRDEVPDGSRGHEQKL) are enriched in basic and acidic residues. The span at 344–355 (PAPPSPSLQPDP) shows a compositional bias: pro residues. Residues 372 to 392 (SLGIFSFLGLAVGALALGLWL) form a helical membrane-spanning segment. Over 393 to 431 (RLRRSGKDGPQKPGFLAPMIPGDKLPGIPNLQRTPENFS) the chain is Cytoplasmic. The tract at residues 402–431 (PQKPGFLAPMIPGDKLPGIPNLQRTPENFS) is disordered.

Belongs to the type I cytokine receptor family. Type 3 subfamily. On IL11 binding, forms a multimer complex with IL6ST/gp130. A short soluble form is also released from the membrane by proteolysis. The sIL11RA is formed either by limited proteolysis of membrane-bound receptors, a process referred to as ectodomain shedding, or directly secreted from the cells after alternative mRNA splicing. mIL11RA is cleaved by the proteases ADAM10, ELANE and PRTN3.

It localises to the membrane. The protein resides in the secreted. In terms of biological role, receptor for interleukin-11 (IL11). The receptor systems for IL6, LIF, OSM, CNTF, IL11 and CT1 can utilize IL6ST for initiating signal transmission. The IL11/IL11RA/IL6ST complex may be involved in the control of proliferation and/or differentiation of skeletogenic progenitor or other mesenchymal cells. Essential for the normal development of craniofacial bones and teeth. Restricts suture fusion and tooth number. Its function is as follows. Soluble form of IL11 receptor (sIL11RA) that acts as an agonist of IL11 activity. The IL11:sIL11RA complex binds to IL6ST/gp130 on cell surfaces and induces signaling also on cells that do not express membrane-bound IL11RA in a process called IL11 trans-signaling. This is Interleukin-11 receptor subunit alpha from Rattus norvegicus (Rat).